The primary structure comprises 140 residues: MSTIRCDIVSAEQEIFRGEATLVVATGELGELGIAPKHAPLITRLKPGKVVVTTASGEQLDFAISGGILEVQPQVVTVLVDTAIRAQDIDEAAVRKAKEEAERLLANRGDTVDVEQAQRQLAEATVQLQALERLRRTLKH.

It belongs to the ATPase epsilon chain family. As to quaternary structure, F-type ATPases have 2 components, CF(1) - the catalytic core - and CF(0) - the membrane proton channel. CF(1) has five subunits: alpha(3), beta(3), gamma(1), delta(1), epsilon(1). CF(0) has three main subunits: a, b and c.

The protein localises to the cell inner membrane. Functionally, produces ATP from ADP in the presence of a proton gradient across the membrane. The sequence is that of ATP synthase epsilon chain from Xanthomonas campestris pv. campestris (strain 8004).